Here is a 107-residue protein sequence, read N- to C-terminus: Sperm-specific class P protein 32 (107 aa).

A disordered region spans residues 1–20; sequence MLTIEPPSATFPASGGSSTH. One can recognise an MSP domain in the interval 1–107; it reads MLTIEPPSAT…GDVTILLKTN (107 aa).

In terms of tissue distribution, expressed at higher level in testis.

The sequence is that of Sperm-specific class P protein 32 (ssp-32) from Caenorhabditis elegans.